Reading from the N-terminus, the 309-residue chain is Ribonuclease Z (309 aa).

Zn(2+) is bound by residues histidine 63, histidine 65, aspartate 67, histidine 68, histidine 145, aspartate 216, and histidine 274. The Proton acceptor role is filled by aspartate 67.

Belongs to the RNase Z family. In terms of assembly, homodimer. Zn(2+) serves as cofactor.

It carries out the reaction Endonucleolytic cleavage of RNA, removing extra 3' nucleotides from tRNA precursor, generating 3' termini of tRNAs. A 3'-hydroxy group is left at the tRNA terminus and a 5'-phosphoryl group is left at the trailer molecule.. Functionally, zinc phosphodiesterase, which displays some tRNA 3'-processing endonuclease activity. Probably involved in tRNA maturation, by removing a 3'-trailer from precursor tRNA. This is Ribonuclease Z from Streptococcus pneumoniae (strain 70585).